The following is a 528-amino-acid chain: ATP synthase subunit beta 2 (528 aa).

Residues 1 to 10 (MADPQATNGT) are compositionally biased toward polar residues. Residues 1-27 (MADPQATNGTGAACAERDASDVGDARD) form a disordered region. Over residues 15-27 (AERDASDVGDARD) the composition is skewed to basic and acidic residues. 179–186 (GGAGVGKT) contacts ATP. Positions 488–499 (AAAREADARREA) are enriched in basic and acidic residues. The interval 488–528 (AAAREADARREAAAAASGAGPGTTSDPASGSAEPQGARHGR) is disordered.

This sequence belongs to the ATPase alpha/beta chains family. As to quaternary structure, F-type ATPases have 2 components, CF(1) - the catalytic core - and CF(0) - the membrane proton channel. CF(1) has five subunits: alpha(3), beta(3), gamma(1), delta(1), epsilon(1). CF(0) has three main subunits: a(1), b(2) and c(9-12). The alpha and beta chains form an alternating ring which encloses part of the gamma chain. CF(1) is attached to CF(0) by a central stalk formed by the gamma and epsilon chains, while a peripheral stalk is formed by the delta and b chains.

Its subcellular location is the cell inner membrane. The enzyme catalyses ATP + H2O + 4 H(+)(in) = ADP + phosphate + 5 H(+)(out). Produces ATP from ADP in the presence of a proton gradient across the membrane. The catalytic sites are hosted primarily by the beta subunits. The polypeptide is ATP synthase subunit beta 2 (Burkholderia pseudomallei (strain 1106a)).